Consider the following 227-residue polypeptide: MAHPLQLGLQDASSPIMEELLYFHDHALMIVFLISSLVLYTISLMLTTKLMHTSTMNAQMVETMWTILPAVILTSIALPSLRILYMTDEINNPLLTIKAMGHQWYWSYEYTDYTDLNFDSYMTPTLDLKPGELRLLEVDNRTVLPMETPIRMLISSEDVLHSWAVPSLGLKTDAIPGRLNQTTLSATRPGLFYGQCSEICGSNHSFMPIVLELVPLKHFETWSTLTS.

The Mitochondrial intermembrane portion of the chain corresponds to 1–14; the sequence is MAHPLQLGLQDASS. A helical transmembrane segment spans residues 15 to 45; sequence PIMEELLYFHDHALMIVFLISSLVLYTISLM. Residues 46-59 are Mitochondrial matrix-facing; that stretch reads LTTKLMHTSTMNAQ. The chain crosses the membrane as a helical span at residues 60–87; the sequence is MVETMWTILPAVILTSIALPSLRILYMT. The Mitochondrial intermembrane portion of the chain corresponds to 88–227; that stretch reads DEINNPLLTI…HFETWSTLTS (140 aa). Cu cation contacts are provided by His-161, Cys-196, Glu-198, Cys-200, His-204, and Met-207. Glu-198 is a Mg(2+) binding site.

It belongs to the cytochrome c oxidase subunit 2 family. As to quaternary structure, component of the cytochrome c oxidase (complex IV, CIV), a multisubunit enzyme composed of 14 subunits. The complex is composed of a catalytic core of 3 subunits MT-CO1, MT-CO2 and MT-CO3, encoded in the mitochondrial DNA, and 11 supernumerary subunits COX4I, COX5A, COX5B, COX6A, COX6B, COX6C, COX7A, COX7B, COX7C, COX8 and NDUFA4, which are encoded in the nuclear genome. The complex exists as a monomer or a dimer and forms supercomplexes (SCs) in the inner mitochondrial membrane with NADH-ubiquinone oxidoreductase (complex I, CI) and ubiquinol-cytochrome c oxidoreductase (cytochrome b-c1 complex, complex III, CIII), resulting in different assemblies (supercomplex SCI(1)III(2)IV(1) and megacomplex MCI(2)III(2)IV(2)). Found in a complex with TMEM177, COA6, COX18, COX20, SCO1 and SCO2. Interacts with TMEM177 in a COX20-dependent manner. Interacts with COX20. Interacts with COX16. The cofactor is Cu cation.

The protein localises to the mitochondrion inner membrane. It catalyses the reaction 4 Fe(II)-[cytochrome c] + O2 + 8 H(+)(in) = 4 Fe(III)-[cytochrome c] + 2 H2O + 4 H(+)(out). In terms of biological role, component of the cytochrome c oxidase, the last enzyme in the mitochondrial electron transport chain which drives oxidative phosphorylation. The respiratory chain contains 3 multisubunit complexes succinate dehydrogenase (complex II, CII), ubiquinol-cytochrome c oxidoreductase (cytochrome b-c1 complex, complex III, CIII) and cytochrome c oxidase (complex IV, CIV), that cooperate to transfer electrons derived from NADH and succinate to molecular oxygen, creating an electrochemical gradient over the inner membrane that drives transmembrane transport and the ATP synthase. Cytochrome c oxidase is the component of the respiratory chain that catalyzes the reduction of oxygen to water. Electrons originating from reduced cytochrome c in the intermembrane space (IMS) are transferred via the dinuclear copper A center (CU(A)) of subunit 2 and heme A of subunit 1 to the active site in subunit 1, a binuclear center (BNC) formed by heme A3 and copper B (CU(B)). The BNC reduces molecular oxygen to 2 water molecules using 4 electrons from cytochrome c in the IMS and 4 protons from the mitochondrial matrix. The chain is Cytochrome c oxidase subunit 2 (MT-CO2) from Galeopterus variegatus (Malayan flying lemur).